We begin with the raw amino-acid sequence, 429 residues long: Zinc finger protein 275 (429 aa).

Residues 31–95 (VSDPSPNTDP…DGKRGSPQNL (65 aa)) are disordered. The span at 34–51 (PSPNTDPAKYSESTSATR) shows a compositional bias: polar residues. The residue at position 76 (S76) is a Phosphoserine. The segment covering 79-89 (FRQHGDSDGKR) has biased composition (basic and acidic residues). 2 C2H2-type zinc fingers span residues 101–123 (FACK…QRVH) and 129–151 (WECG…RKSH). The segment at 149–176 (KSHVAAEPQPGPSRALENAAEKREQMER) is disordered. Positions 167–176 (AAEKREQMER) are enriched in basic and acidic residues. 9 consecutive C2H2-type zinc fingers follow at residues 181–203 (FECE…LRVH), 209–231 (FDCE…QKLH), 237–259 (FACK…QRMH), 265–287 (FDCD…QRIH), 293–315 (YGCP…RRIH), 321–343 (YACG…ARIH), 349–371 (YACG…RRIH), 377–399 (YECD…RRIH), and 405–427 (CECS…QPTH).

The protein belongs to the krueppel C2H2-type zinc-finger protein family.

The protein localises to the nucleus. Functionally, may be involved in transcriptional regulation. The sequence is that of Zinc finger protein 275 (ZNF275) from Homo sapiens (Human).